The chain runs to 192 residues: uncharacterized protein (192 aa).

Belongs to the IIV-6 358L family.

This is an uncharacterized protein from Aedes vexans (Inland floodwater mosquito).